Here is a 364-residue protein sequence, read N- to C-terminus: B3 domain-containing protein At5g38490 (364 aa).

The interval 148 to 202 (ASTSSSSLLNLPCLEPSTETKDVPNPNYQSSSPSSCLTGKTNRKRRAVEQRKSGK) is disordered. Positions 260–364 (FQKLIRNDFL…GVLCFALDTE (105 aa)) form a DNA-binding region, TF-B3.

Its subcellular location is the nucleus. The sequence is that of B3 domain-containing protein At5g38490 from Arabidopsis thaliana (Mouse-ear cress).